A 221-amino-acid polypeptide reads, in one-letter code: Casparian strip membrane protein 3 (221 aa).

Positions 1–12 (MDIEKAASRREE) are enriched in basic and acidic residues. The interval 1 to 28 (MDIEKAASRREEEEPIVQRPKLDKGKGK) is disordered. Over 1-58 (MDIEKAASRREEEEPIVQRPKLDKGKGKAHVFAPPMNYNRIMDKHKQEKVSAAGWKRG) the chain is Cytoplasmic. Residues 59–79 (VAIFDFVLRLIAAITAMAAAA) traverse the membrane as a helical segment. The Extracellular segment spans residues 80–109 (KMATTEETLPFFTQFLQFQAEYTDLPTMSS). Residues 110–130 (FVIVNSIVGGYLTLSLPFSIV) form a helical membrane-spanning segment. The Cytoplasmic segment spans residues 131-148 (CILRPLAVPPRLFLIICD). Residues 149-169 (TAMMGLTMMAASASAAIVYLA) traverse the membrane as a helical segment. Over 170 to 194 (HNGNSSSNWLPVCQQFGDFCQGTSG) the chain is Extracellular. N173 carries an N-linked (GlcNAc...) asparagine glycan. The helical transmembrane segment at 195 to 215 (AVVASFIAATLLMFLVILSAF) threads the bilayer. Over 216-221 (ALKRST) the chain is Cytoplasmic.

The protein belongs to the Casparian strip membrane proteins (CASP) family. Homodimer and heterodimers.

The protein localises to the cell membrane. In terms of biological role, regulates membrane-cell wall junctions and localized cell wall deposition. Required for establishment of the Casparian strip membrane domain (CSD) and the subsequent formation of Casparian strips, a cell wall modification of the root endodermis that determines an apoplastic barrier between the intraorganismal apoplasm and the extraorganismal apoplasm and prevents lateral diffusion. This Arabidopsis lyrata subsp. lyrata (Lyre-leaved rock-cress) protein is Casparian strip membrane protein 3.